The following is a 252-amino-acid chain: Imidazole glycerol phosphate synthase subunit HisF (252 aa).

Residues aspartate 11 and aspartate 130 contribute to the active site.

This sequence belongs to the HisA/HisF family. Heterodimer of HisH and HisF.

The protein localises to the cytoplasm. It carries out the reaction 5-[(5-phospho-1-deoxy-D-ribulos-1-ylimino)methylamino]-1-(5-phospho-beta-D-ribosyl)imidazole-4-carboxamide + L-glutamine = D-erythro-1-(imidazol-4-yl)glycerol 3-phosphate + 5-amino-1-(5-phospho-beta-D-ribosyl)imidazole-4-carboxamide + L-glutamate + H(+). It functions in the pathway amino-acid biosynthesis; L-histidine biosynthesis; L-histidine from 5-phospho-alpha-D-ribose 1-diphosphate: step 5/9. Functionally, IGPS catalyzes the conversion of PRFAR and glutamine to IGP, AICAR and glutamate. The HisF subunit catalyzes the cyclization activity that produces IGP and AICAR from PRFAR using the ammonia provided by the HisH subunit. The sequence is that of Imidazole glycerol phosphate synthase subunit HisF from Bacillus velezensis (strain DSM 23117 / BGSC 10A6 / LMG 26770 / FZB42) (Bacillus amyloliquefaciens subsp. plantarum).